The primary structure comprises 502 residues: Cardiolipin synthase (502 aa).

3 helical membrane-spanning segments follow: residues 7–27, 29–49, and 59–79; these read VIIF…YWEG, LLGG…FVIS, and ITWL…YLMF. PLD phosphodiesterase domains lie at 237-264 and 415-442; these read INFR…GDEY and SKGF…DMRS. Active-site residues include His242, Lys244, Asp249, His420, Lys422, and Asp427.

Belongs to the phospholipase D family. Cardiolipin synthase subfamily.

The protein resides in the cell membrane. It carries out the reaction 2 a 1,2-diacyl-sn-glycero-3-phospho-(1'-sn-glycerol) = a cardiolipin + glycerol. Functionally, catalyzes the reversible phosphatidyl group transfer from one phosphatidylglycerol molecule to another to form cardiolipin (CL) (diphosphatidylglycerol) and glycerol. The chain is Cardiolipin synthase (cls) from Geobacillus sp. (strain WCH70).